A 145-amino-acid polypeptide reads, in one-letter code: Large ribosomal subunit protein uL13 (145 aa).

The protein belongs to the universal ribosomal protein uL13 family. Part of the 50S ribosomal subunit.

This protein is one of the early assembly proteins of the 50S ribosomal subunit, although it is not seen to bind rRNA by itself. It is important during the early stages of 50S assembly. This Geobacillus sp. (strain WCH70) protein is Large ribosomal subunit protein uL13.